A 105-amino-acid polypeptide reads, in one-letter code: ATP-dependent Clp protease adapter protein ClpS (105 aa).

Positions Met-1–Val-27 are disordered.

This sequence belongs to the ClpS family. As to quaternary structure, binds to the N-terminal domain of the chaperone ClpA.

In terms of biological role, involved in the modulation of the specificity of the ClpAP-mediated ATP-dependent protein degradation. In Mycolicibacterium paratuberculosis (strain ATCC BAA-968 / K-10) (Mycobacterium paratuberculosis), this protein is ATP-dependent Clp protease adapter protein ClpS.